The sequence spans 439 residues: GTPase Der (439 aa).

EngA-type G domains are found at residues 4-168 (PIVA…KDDE) and 177-352 (INIA…DNYT). GTP contacts are provided by residues 10-17 (GRPNVGKS), 57-61 (DTGGI), 120-123 (NKID), 183-190 (GKPNVGKS), 230-234 (DTAGL), and 295-298 (NKWD). The region spanning 353 to 437 (KRVKTGVLND…GIKLEFRERK (85 aa)) is the KH-like domain.

The protein belongs to the TRAFAC class TrmE-Era-EngA-EngB-Septin-like GTPase superfamily. EngA (Der) GTPase family. Associates with the 50S ribosomal subunit.

Its function is as follows. GTPase that plays an essential role in the late steps of ribosome biogenesis. The polypeptide is GTPase Der (Clostridium botulinum (strain Langeland / NCTC 10281 / Type F)).